The following is a 25-amino-acid chain: Mu-conotoxin CnIIIB (25 aa).

Glutamine 1 carries the post-translational modification Pyrrolidone carboxylic acid; partial. 3 disulfide bridges follow: cysteine 3–cysteine 15, cysteine 4–cysteine 21, and cysteine 10–cysteine 22.

The protein belongs to the conotoxin M superfamily. In terms of tissue distribution, expressed by the venom duct.

It is found in the secreted. Functionally, mu-conotoxins block voltage-gated sodium channels (Nav). This synthetic toxin blocks slightly but irreversibly tetrodotoxin-resistant VGSCs. This is Mu-conotoxin CnIIIB from Conus consors (Singed cone).